A 199-amino-acid chain; its full sequence is Inner membrane protein E199L (199 aa).

Asn-131 carries N-linked (GlcNAc...) asparagine; by host glycosylation. A helical transmembrane segment spans residues 150 to 170 (INVMNHPFLTLILIILILVII).

It belongs to the asfivirus E199L family. As to quaternary structure, interacts with host PYCR2; this interaction results in autophagy activation.

The protein localises to the virion membrane. Its subcellular location is the host membrane. Essential for viral fusion with host endosomal membrane and core release. Not required for virus morphogenesis and egress. Induces complete autophagy through the interaction with and down-regulation of host PYCR2. The polypeptide is Inner membrane protein E199L (African swine fever virus (isolate Pig/Kenya/KEN-50/1950) (ASFV)).